The following is a 369-amino-acid chain: Chromatin modification-related protein EAF3 (369 aa).

The Tudor-knot domain maps to 9–97; that stretch reads TVYAYHGPLI…WDEWVGIDRI (89 aa). Disordered regions lie at residues 43-66 and 126-191; these read PLEE…IAKF and IIVN…NKSK. Over residues 53-62 the composition is skewed to basic residues; that stretch reads NHHHHHHSQH. Positions 126–135 are enriched in low complexity; the sequence is IIVNATTKNH. Basic residues predominate over residues 136–149; it reads TNNKNKKESNKRKS. Positions 150–191 are enriched in low complexity; it reads SSATTTSGVTAGTNNNKKQKSASTSTTNNTSGNSGTTSNKSK. The region spanning 193–368 is the MRG domain; sequence ILSRLNLNFP…TSPQYDSLAR (176 aa).

This sequence belongs to the MRG family. In terms of assembly, component of the NuA4 histone acetyltransferase complex.

It localises to the nucleus. Involved in deacetylation of histones, chromatin assembly and chromosome segregation. May act as a transcriptional oscillator, directing histone deacetylases to specific chromosomal domains. Component of the NuA4 histone acetyltransferase complex which is involved in transcriptional activation of selected genes principally by acetylation of nucleosomal histone H4 and H2A. The NuA4 complex is also involved in DNA repair. The polypeptide is Chromatin modification-related protein EAF3 (EAF3) (Candida albicans (strain SC5314 / ATCC MYA-2876) (Yeast)).